A 336-amino-acid polypeptide reads, in one-letter code: Methionyl-tRNA formyltransferase (336 aa).

110–113 serves as a coordination point for (6S)-5,6,7,8-tetrahydrofolate; sequence SLLP.

Belongs to the Fmt family.

It catalyses the reaction L-methionyl-tRNA(fMet) + (6R)-10-formyltetrahydrofolate = N-formyl-L-methionyl-tRNA(fMet) + (6S)-5,6,7,8-tetrahydrofolate + H(+). Functionally, attaches a formyl group to the free amino group of methionyl-tRNA(fMet). The formyl group appears to play a dual role in the initiator identity of N-formylmethionyl-tRNA by promoting its recognition by IF2 and preventing the misappropriation of this tRNA by the elongation apparatus. This Prochlorococcus marinus (strain NATL2A) protein is Methionyl-tRNA formyltransferase.